Consider the following 162-residue polypeptide: uncharacterized protein (162 aa).

The protein belongs to the baculoviridae 19 kDa protein family.

This is an uncharacterized protein from Tortricidae (ClGV).